The primary structure comprises 380 residues: XK-related protein 9 (380 aa).

Helical transmembrane passes span 10 to 30 (LLSAAGLVMYVADVCTDAALV), 39 to 59 (VVCAALTLLFIVVGLLVTQVF), 81 to 101 (LPVVSKRGLATLHLFGVGIFI), 167 to 187 (CSLVQLVGMSFSFMNAAWALV), 228 to 248 (ALLLIFSIYSTVGLAIVWLLG), 264 to 284 (SLEFLYRAIVGVILTFTFFNV), 294 to 314 (ITYYFLHSLINVLSLLLLFVL), and 329 to 349 (TLMAACSVLGLVCLVLYYLLL).

The protein belongs to the XK family.

It localises to the cell membrane. It catalyses the reaction a 1,2-diacyl-sn-glycero-3-phospho-L-serine(in) = a 1,2-diacyl-sn-glycero-3-phospho-L-serine(out). Phospholipid scramblase that promotes phosphatidylserine exposure on apoptotic cell surface. Phosphatidylserine is a specific marker only present at the surface of apoptotic cells and acts as a specific signal for engulfment. The sequence is that of XK-related protein 9 from Tetraodon nigroviridis (Spotted green pufferfish).